We begin with the raw amino-acid sequence, 857 residues long: Leucine--tRNA ligase (857 aa).

Residues 42-52 carry the 'HIGH' region motif; the sequence is PYPSGRLHMGH. Residues 617–621 carry the 'KMSKS' region motif; the sequence is KMSKS. ATP is bound at residue Lys-620.

The protein belongs to the class-I aminoacyl-tRNA synthetase family.

The protein localises to the cytoplasm. It carries out the reaction tRNA(Leu) + L-leucine + ATP = L-leucyl-tRNA(Leu) + AMP + diphosphate. This Vibrio parahaemolyticus serotype O3:K6 (strain RIMD 2210633) protein is Leucine--tRNA ligase.